The sequence spans 205 residues: MVRVKICGITNLEDALFSVESGADAVGFVFYSKSKRYVSPEKAREISLNLPPFVFRVGVFVNESLESVLDIAFHAGLNAVQLHGDESVEFCERLNEKIMVIKAVGISEEQDVRRALEYRKFPVLLDTKVSGYGGSGKVFNWSVVLPYRDQFRYLILSGGLNPRNVERAIEMVRPFAVDVSSGVEISPGKKDHNLVREFIKKAKGL.

It belongs to the TrpF family.

The enzyme catalyses N-(5-phospho-beta-D-ribosyl)anthranilate = 1-(2-carboxyphenylamino)-1-deoxy-D-ribulose 5-phosphate. The protein operates within amino-acid biosynthesis; L-tryptophan biosynthesis; L-tryptophan from chorismate: step 3/5. This chain is N-(5'-phosphoribosyl)anthranilate isomerase, found in Thermotoga neapolitana (strain ATCC 49049 / DSM 4359 / NBRC 107923 / NS-E).